The chain runs to 48 residues: ATP synthase protein 8 (48 aa).

M1 bears the N-formylmethionine mark. Residues 1–12 (MPQLIPFFFLNQ) are Mitochondrial intermembrane-facing. Residues 13–33 (LFYGYLALFALLVLVSWVILP) traverse the membrane as a helical segment. Topologically, residues 34–48 (YLLQLQIVRLLITKL) are mitochondrial matrix.

F-type ATP synthases have 2 components, the catalytic core F(1) and the membrane-embedded component F(0), linked together by a central stalk and a peripheral stalk. The central stalk, also called rotor shaft, is often seen as part of F(1). The peripheral stalk is seen as part of F(0). F(0) contains the membrane channel next to the rotor. F-type ATP synthases form dimers but each monomer functions independently in ATP generation. The dimer consists of 18 different polypeptides: ATP1 (subunit alpha, part of F(1), 3 molecules per monomer), ATP2 (subunit beta, part of F(1), 3 molecules per monomer), ATP3 (subunit gamma, part of the central stalk), ATP4 (subunit b, part of the peripheral stalk), ATP5/OSCP (subunit 5/OSCP, part of the peripheral stalk), ATP6 (subunit a, part of the peripheral stalk), ATP7 (subunit d, part of the peripheral stalk), ATP8 (subunit 8, part of the peripheral stalk), OLI1 (subunit c, part of the rotor, 10 molecules per monomer), ATP14 (subunit h, part of the peripheral stalk), ATP15 (subunit epsilon, part of the central stalk), ATP16 (subunit delta, part of the central stalk), ATP17 (subunit f, part of the peripheral stalk), ATP18 (subunit i/j, part of the peripheral stalk). Dimer-specific subunits are ATP19 (subunit k, at interface between monomers), ATP20 (subunit g, at interface between monomers), TIM11 (subunit e, at interface between monomers). Also contains subunit L.

The protein localises to the mitochondrion inner membrane. Functionally, mitochondrial membrane ATP synthase (F(1)F(0) ATP synthase or Complex V) produces ATP from ADP in the presence of a proton gradient across the membrane which is generated by electron transport complexes of the respiratory chain. F-type ATP synthases consist of two structural domains, F(1) - containing the extramembraneous catalytic core, and F(0) - containing the membrane proton channel, linked together by a central stalk and a peripheral stalk. During catalysis, ATP synthesis in the catalytic domain of F(1) is coupled via a rotary mechanism of the central stalk subunits to proton translocation. Part of the complex F(0) domain. Minor subunit located with subunit a/ATP6 in the membrane. In Pichia angusta (Yeast), this protein is ATP synthase protein 8.